We begin with the raw amino-acid sequence, 230 residues long: Sugar fermentation stimulation protein homolog (230 aa).

Belongs to the SfsA family.

The chain is Sugar fermentation stimulation protein homolog from Clostridium botulinum (strain Okra / Type B1).